The following is a 347-amino-acid chain: S-adenosylmethionine:tRNA ribosyltransferase-isomerase (347 aa).

The protein belongs to the QueA family. In terms of assembly, monomer.

It is found in the cytoplasm. It carries out the reaction 7-aminomethyl-7-carbaguanosine(34) in tRNA + S-adenosyl-L-methionine = epoxyqueuosine(34) in tRNA + adenine + L-methionine + 2 H(+). It participates in tRNA modification; tRNA-queuosine biosynthesis. Its function is as follows. Transfers and isomerizes the ribose moiety from AdoMet to the 7-aminomethyl group of 7-deazaguanine (preQ1-tRNA) to give epoxyqueuosine (oQ-tRNA). The protein is S-adenosylmethionine:tRNA ribosyltransferase-isomerase of Pseudomonas aeruginosa (strain UCBPP-PA14).